A 103-amino-acid chain; its full sequence is Large ribosomal subunit protein bL21 (103 aa).

This sequence belongs to the bacterial ribosomal protein bL21 family. As to quaternary structure, part of the 50S ribosomal subunit. Contacts protein L20.

Functionally, this protein binds to 23S rRNA in the presence of protein L20. The sequence is that of Large ribosomal subunit protein bL21 from Aliivibrio salmonicida (strain LFI1238) (Vibrio salmonicida (strain LFI1238)).